We begin with the raw amino-acid sequence, 173 residues long: Translocon-associated protein subunit delta (173 aa).

The signal sequence occupies residues 1-23; sequence MAAMASFGALALLLLSGLSCCSA. The Lumenal segment spans residues 24–144; that stretch reads EACLEPQITP…SVDHRGTWNG (121 aa). Residues Cys-26 and Cys-57 are joined by a disulfide bond. Residue Lys-73 forms a Glycyl lysine isopeptide (Lys-Gly) (interchain with G-Cter in ubiquitin) linkage. Residues 145 to 165 form a helical membrane-spanning segment; that stretch reads PWVSTEVLAAAIGIVIYYLAF. Over 166–173 the chain is Cytoplasmic; the sequence is SAKSHIQA.

This sequence belongs to the TRAP-delta family. In terms of assembly, heterotetramer of TRAP-alpha, TRAP-beta, TRAP-delta and TRAP-gamma.

It is found in the endoplasmic reticulum membrane. TRAP proteins are part of a complex whose function is to bind calcium to the ER membrane and thereby regulate the retention of ER resident proteins. The polypeptide is Translocon-associated protein subunit delta (Ssr4) (Rattus norvegicus (Rat)).